Here is a 92-residue protein sequence, read N- to C-terminus: DNA-directed RNA polymerase subunit Rpo11 (92 aa).

Belongs to the archaeal Rpo11/eukaryotic RPB11/RPC19 RNA polymerase subunit family. As to quaternary structure, part of the 13-subunit RNA polymerase complex.

It localises to the cytoplasm. The catalysed reaction is RNA(n) + a ribonucleoside 5'-triphosphate = RNA(n+1) + diphosphate. Functionally, DNA-dependent RNA polymerase (RNAP) catalyzes the transcription of DNA into RNA using the four ribonucleoside triphosphates as substrates. The sequence is that of DNA-directed RNA polymerase subunit Rpo11 from Saccharolobus shibatae (strain ATCC 51178 / DSM 5389 / JCM 8931 / NBRC 15437 / B12) (Sulfolobus shibatae).